Reading from the N-terminus, the 489-residue chain is Mitochondrial-processing peptidase subunit beta (489 aa).

Residues 1-45 constitute a mitochondrion transit peptide; that stretch reads MAAAALSRTLLPEARRRLWGFTRRLPLRRAAAQPLYFGGDRLRST. A Zn(2+)-binding site is contributed by histidine 101. Glutamate 104 acts as the Proton acceptor in catalysis. Histidine 105 and glutamate 181 together coordinate Zn(2+).

This sequence belongs to the peptidase M16 family. As to quaternary structure, heterodimer of PMPCA (alpha) and PMPCB (beta) subunits, forming the mitochondrial processing protease (MPP) in which PMPCA is involved in substrate recognition and binding and PMPCB is the catalytic subunit. Zn(2+) serves as cofactor.

It is found in the mitochondrion matrix. It carries out the reaction Release of N-terminal transit peptides from precursor proteins imported into the mitochondrion, typically with Arg in position P2.. Its activity is regulated as follows. Binding to PMPCA is required for catalytic activity. In terms of biological role, catalytic subunit of the essential mitochondrial processing protease (MPP), which cleaves the mitochondrial sequence off newly imported precursors proteins. Preferentially, cleaves after an arginine at position P2. Required for PINK1 turnover by coupling PINK1 mitochondrial import and cleavage, which results in subsequent PINK1 proteolysis. The sequence is that of Mitochondrial-processing peptidase subunit beta (Pmpcb) from Mus musculus (Mouse).